A 215-amino-acid chain; its full sequence is Adenylate kinase (215 aa).

10 to 15 provides a ligand contact to ATP; the sequence is GAGKGT. An NMP region spans residues 30–59; sequence STGDILRANVREGTELGLAAKEYMDKGELV. AMP-binding positions include Thr-31, Arg-36, 57-59, 85-88, and Gln-92; these read ELV and GYPR. Positions 126-162 are LID; the sequence is GRLMCNCGASYHRTFNPPKKDDVCDICGGKVFQRADD. Residue Arg-127 participates in ATP binding. Zn(2+) contacts are provided by Cys-130 and Cys-132. Residue 135–136 participates in ATP binding; sequence SY. Cys-149 and Cys-152 together coordinate Zn(2+). AMP is bound by residues Arg-159 and Arg-170. Lys-198 contacts ATP.

It belongs to the adenylate kinase family. In terms of assembly, monomer.

It is found in the cytoplasm. It catalyses the reaction AMP + ATP = 2 ADP. The protein operates within purine metabolism; AMP biosynthesis via salvage pathway; AMP from ADP: step 1/1. Its function is as follows. Catalyzes the reversible transfer of the terminal phosphate group between ATP and AMP. Plays an important role in cellular energy homeostasis and in adenine nucleotide metabolism. The protein is Adenylate kinase of Methanosarcina barkeri (strain Fusaro / DSM 804).